We begin with the raw amino-acid sequence, 553 residues long: Phosphoglucomutase (553 aa).

The tract at residues Met-1 to Lys-25 is disordered. Polar residues predominate over residues Ser-11–Thr-20. Substrate contacts are provided by residues Thr-20, Arg-24, Ser-117–His-118, and Lys-131. Ser-117 acts as the Phosphoserine intermediate in catalysis. Ser-117 is a binding site for Mg(2+). Mg(2+) contacts are provided by Asp-289, Asp-291, and Asp-293. Residues Asp-293–Arg-294, Thr-352, Glu-371–Ser-373, Lys-384, and Arg-509 contribute to the substrate site.

This sequence belongs to the phosphohexose mutase family. Mg(2+) is required as a cofactor.

Its subcellular location is the cytoplasm. It carries out the reaction alpha-D-glucose 1-phosphate = alpha-D-glucose 6-phosphate. Functionally, catalyzes the reversible conversion of glucose 1-phosphate into glucose 6-phosphate. This enzyme participates in both the breakdown and synthesis of glucose. The chain is Phosphoglucomutase from Entamoeba histolytica (strain ATCC 30459 / HM-1:IMSS / ABRM).